A 121-amino-acid chain; its full sequence is Large ribosomal subunit protein uL24 (121 aa).

This sequence belongs to the universal ribosomal protein uL24 family. As to quaternary structure, part of the 50S ribosomal subunit.

In terms of biological role, one of two assembly initiator proteins, it binds directly to the 5'-end of the 23S rRNA, where it nucleates assembly of the 50S subunit. Its function is as follows. Located at the polypeptide exit tunnel on the outside of the subunit. This chain is Large ribosomal subunit protein uL24, found in Methanocorpusculum labreanum (strain ATCC 43576 / DSM 4855 / Z).